A 998-amino-acid polypeptide reads, in one-letter code: MDFPSQSEKKKYITKKRTTLFSYDDDDDDDDFDQNREFIHMSSYEESKDQQNSFNTLLLSELSNCEDQKQQQQQQSSSPTQSDCDSSPTNNNNNNNTNNNIVHHLNNSNSIPISGSNNNNNNNNNNNNNNNNNNNNNNNSHHHHLRKGRRLFHDDNDDQPIYPASASLSSTKTNMFPSSPILYSSPSSQQQQQQQQQQSQSQQTNEFKVPSFTPLSFINNSSTNSMNIRPINNNRIYNNLNNNNNNNNNNNNNINNINNNNINNINNNYNNNNNNEEDQIFSSSLPTSPVSWSANGSMMNGHNINNITGNHSRFLSNGSYNKGNTFPSTEVKRVRPDQRAFNENSFSMSPTPSPPPTPSLKRNNYSSPKFEPVFIRLAEERTNRKRSTSMTSNVNNNNNNNANNNNVNNNNNNNNGPNSISSLIANVNPFTEEGRLQSLNKPCPSFQLVNNNNNNNNASNNNNDNNNNNNNNNNNNNNNDDTCNNNNNNSQNIDNNLITKFSLYKHTFQELDLIGEGSFGHVYKVRHRIDGCLYAIKKTKKPLKGQKDRDIVLREVYGLSAIKDHTNIVRYFNAWEEDSHIFIQMEHCNGGNIYKWVTEHIKQSESNLLLLAKQILTGIVYIHSLGLVHLDIKPENIYIIYKCNQNQIITNNNNTCSINNSSNGSDSYFKSKIKTTENDLDNFITTTNSVNNNNCNNNNNNNVDNQNNNNQNNYLIIDGNKINFNSITFKIGDLGLLNEATNTKIYSEGDSRYLSRELLHDDMSALKKSDIFSLGCTLYELARCKPLPKSGMEWDSIRNGILSFEKEDSIYDDNKNDFSTEFWQLIKSMIHPDPSVRPSAEQLLEHPLIKYGVIEIDDFENEIETLKNLLAEKEKVLIIQKEKQKLRQNQLQQKMQQPNFIELKQQPQQQQEKQQMLHQQKQQYLEQHNNNNDNNNNEFDESEKEYQIQLEQFKIQKMQFQLQQEQLQYQHQHKHQNFFTKQICTASQIEGGIKNMAL.

Disordered stretches follow at residues 1-34 (MDFP…DFDQ), 65-207 (CEDQ…TNEF), 265-284 (INNN…FSSS), 316-367 (SNGS…NYSS), 380-420 (ERTN…PNSI), and 435-489 (RLQS…NNNN). A compositionally biased stretch (acidic residues) spans 23–32 (YDDDDDDDDF). Residues 70 to 139 (QQQQQQSSSP…NNNNNNNNNN (70 aa)) show a composition bias toward low complexity. Residues 140 to 150 (SHHHHLRKGRR) show a composition bias toward basic residues. A compositionally biased stretch (polar residues) spans 166 to 177 (ASLSSTKTNMFP). Composition is skewed to low complexity over residues 184–203 (SSPS…QSQQ) and 265–274 (INNNYNNNNN). Residues 316–328 (SNGSYNKGNTFPS) are compositionally biased toward polar residues. Residues 330 to 340 (EVKRVRPDQRA) are compositionally biased toward basic and acidic residues. Composition is skewed to low complexity over residues 393-415 (NVNN…NNNN) and 450-489 (NNNN…NNNN). A Protein kinase domain is found at 508–849 (FQELDLIGEG…AEQLLEHPLI (342 aa)). ATP contacts are provided by residues 514 to 522 (IGEGSFGHV) and Lys-537. The active-site Proton acceptor is Asp-631. Mg(2+) is bound by residues Asn-636 and Glu-677.

The protein belongs to the protein kinase superfamily. Ser/Thr protein kinase family. WEE1 subfamily.

It carries out the reaction L-seryl-[protein] + ATP = O-phospho-L-seryl-[protein] + ADP + H(+). The catalysed reaction is L-threonyl-[protein] + ATP = O-phospho-L-threonyl-[protein] + ADP + H(+). The sequence is that of Probable protein kinase DDB_G0277539 from Dictyostelium discoideum (Social amoeba).